The primary structure comprises 188 residues: Proline-rich protein 3 (188 aa).

The tract at residues 1 to 157 is disordered; the sequence is MPKRKKQNHH…DPQVMEDKSD (157 aa). 2 stretches are compositionally biased toward pro residues: residues 35 to 46 and 69 to 82; these read IGPPSLLGPPPM and LIPPLLSLPPPPWG. Residues 83 to 96 show a composition bias toward low complexity; it reads RGPIRRGLGPRSSP. A compositionally biased stretch (basic and acidic residues) spans 145-157; it reads PKDDPQVMEDKSD. The segment at 155–183 adopts a C3H1-type zinc-finger fold; that stretch reads KSDRPVCRHFAKKGHCRYEDLCAFYHPGV.

The chain is Proline-rich protein 3 (PRR3) from Homo sapiens (Human).